Reading from the N-terminus, the 310-residue chain is Homoserine kinase (310 aa).

91–101 (PLARGLGSSAA) is a binding site for ATP.

This sequence belongs to the GHMP kinase family. Homoserine kinase subfamily.

It is found in the cytoplasm. The catalysed reaction is L-homoserine + ATP = O-phospho-L-homoserine + ADP + H(+). It functions in the pathway amino-acid biosynthesis; L-threonine biosynthesis; L-threonine from L-aspartate: step 4/5. Functionally, catalyzes the ATP-dependent phosphorylation of L-homoserine to L-homoserine phosphate. The chain is Homoserine kinase from Bacillus pumilus (strain SAFR-032).